A 133-amino-acid polypeptide reads, in one-letter code: Small ribosomal subunit protein uS8c (133 aa).

This sequence belongs to the universal ribosomal protein uS8 family. In terms of assembly, part of the 30S ribosomal subunit.

The protein localises to the plastid. It localises to the chloroplast. In terms of biological role, one of the primary rRNA binding proteins, it binds directly to 16S rRNA central domain where it helps coordinate assembly of the platform of the 30S subunit. The chain is Small ribosomal subunit protein uS8c (rps8) from Chlorokybus atmophyticus (Soil alga).